The following is a 537-amino-acid chain: GTPase LSG1-1 (537 aa).

One can recognise a CP-type G domain in the interval 158 to 362; that stretch reads WRQLWRVLER…LCDCPGLVFP (205 aa). Positions 176–180 match the DARXP motif motif; the sequence is DARDP. A G4 region spans residues 206-209; sequence NKAD. A GTP-binding site is contributed by 206-209; sequence NKAD. The G5 stretch occupies residues 234 to 236; the sequence is SAK. The G1 stretch occupies residues 311–318; it reads GYPNVGKS. 314–319 is a binding site for GTP; it reads NVGKSS. Residues 337–341 are G2; it reads GKTKH. Residues 355–358 form a G3 region; sequence DCPG. Gly-358 is a GTP binding site. Residues 484-508 are disordered; the sequence is LGAETREGSQTEKKGEEAPSLGLDQ. The span at 487–500 shows a compositional bias: basic and acidic residues; that stretch reads ETREGSQTEKKGEE.

It belongs to the TRAFAC class YlqF/YawG GTPase family. In terms of tissue distribution, ubiquitous, with the highest expression in stem and hypsophyll on day 66.

It localises to the cytoplasm. Functionally, GTPase that might be redundant with LSG1-2 for ribosome biogenesis. Binds to 23S rRNA. The sequence is that of GTPase LSG1-1 from Arabidopsis thaliana (Mouse-ear cress).